A 382-amino-acid polypeptide reads, in one-letter code: MEPVIKINQGETKWDVRHKVWNYIEVKNLANFPRPVHNRIPNFKGALEACNKVAQLEIFIESAVVKVDPDKPMEGVRLAALKARKSLLVPTPRLRFGLFNRITPPKGATKETLRVCSTSQGIKEFSVPVGLDDKVQVDLVVVGSVAVSEKGYRIGKGEGFADMEYAMMACMGSVTESTWVITVVHDCQVMDIPEELIERHDLMVDFIITATRVIKTECKHPKPQGIIWSMLHKEELKKIPILKKLRTLEQEAGKDVALKLIHAGEDEYRKSKELQWQSHPKADLEFKCLASNSDRCSGFEPKFPTTTVYLSDIPPALRVSELKGLLREQEVVPLQIRWQGAKRKAFLLYADFTGAERATAILQKLFINGHTIQAKCVSSQKM.

Positions 306–382 (TTVYLSDIPP…QAKCVSSQKM (77 aa)) constitute an RRM domain.

In Danio rerio (Zebrafish), this protein is Methenyltetrahydrofolate synthase domain-containing protein (mthfsd).